We begin with the raw amino-acid sequence, 333 residues long: (2R)-3-sulfolactate dehydrogenase (NADP(+)) (333 aa).

Belongs to the LDH2/MDH2 oxidoreductase family.

It catalyses the reaction (2R)-3-sulfolactate + NADP(+) = 3-sulfopyruvate + NADPH + H(+). Functionally, catalyzes the reduction of sulfopyruvate to (R)-sulfolactate. Together with SlcC, provides a racemase system that converts (2S)-3-sulfolactate to (2R)-3-sulfolactate, which is degraded further by (2R)-sulfolactate sulfo-lyase. This chain is (2R)-3-sulfolactate dehydrogenase (NADP(+)) (comC), found in Chromohalobacter salexigens (strain ATCC BAA-138 / DSM 3043 / CIP 106854 / NCIMB 13768 / 1H11).